A 571-amino-acid polypeptide reads, in one-letter code: Proline--tRNA ligase (571 aa).

This sequence belongs to the class-II aminoacyl-tRNA synthetase family. ProS type 1 subfamily. In terms of assembly, homodimer.

It localises to the cytoplasm. The catalysed reaction is tRNA(Pro) + L-proline + ATP = L-prolyl-tRNA(Pro) + AMP + diphosphate. In terms of biological role, catalyzes the attachment of proline to tRNA(Pro) in a two-step reaction: proline is first activated by ATP to form Pro-AMP and then transferred to the acceptor end of tRNA(Pro). As ProRS can inadvertently accommodate and process non-cognate amino acids such as alanine and cysteine, to avoid such errors it has two additional distinct editing activities against alanine. One activity is designated as 'pretransfer' editing and involves the tRNA(Pro)-independent hydrolysis of activated Ala-AMP. The other activity is designated 'posttransfer' editing and involves deacylation of mischarged Ala-tRNA(Pro). The misacylated Cys-tRNA(Pro) is not edited by ProRS. The sequence is that of Proline--tRNA ligase from Pseudomonas paraeruginosa (strain DSM 24068 / PA7) (Pseudomonas aeruginosa (strain PA7)).